The sequence spans 301 residues: Transcription elongation factor A protein 1 (301 aa).

Met1 is subject to N-acetylmethionine. Residues 3-80 form the TFIIS N-terminal domain; that stretch reads DEVIRIAKKM…KSWKKLLDGP (78 aa). A Glycyl lysine isopeptide (Lys-Gly) (interchain with G-Cter in ubiquitin) cross-link involves residue Lys55. Residues Ser57, Ser81, Ser97, and Ser100 each carry the phosphoserine modification. A compositionally biased stretch (basic and acidic residues) spans 76 to 93; the sequence is LLDGPSTDKDSEEKKKDT. A disordered region spans residues 76-139; that stretch reads LLDGPSTDKD…FPRAPSTSDS (64 aa). The TFIIS central domain occupies 140 to 256; the sequence is VRLKCREMLA…EHQMAKTGGT (117 aa). Residues 259 to 299 form a TFIIS-type zinc finger; sequence DLFTCGKCKKKNCTYTQVQTRSADEPMTTFVVCNECGNRWK. Residues Cys263, Cys266, Cys291, and Cys294 each coordinate Zn(2+).

The protein belongs to the TFS-II family. In terms of assembly, interacts with EAF2. Associates with UBR5 and forms a transcription regulatory complex made of CDK9, Pol II, UBR5 and TCEA1/TFIIS. Part of TBP-based Pol II pre-initiation complex (PIC), in which Pol II core assembles with general transcription factors and other specific initiation factors including GTF2E1, GTF2E2, GTF2F1, GTF2F2, TCEA1, ERCC2, ERCC3, GTF2H2, GTF2H3, GTF2H4, GTF2H5, GTF2A1, GTF2A2, GTF2B and TBP; this large multi-subunit PIC complex mediates DNA unwinding and targets Pol II core to the transcription start site where the first phosphodiester bond forms.

It localises to the nucleus. Functionally, necessary for efficient RNA polymerase II transcription elongation past template-encoded arresting sites. The arresting sites in DNA have the property of trapping a certain fraction of elongating RNA polymerases that pass through, resulting in locked ternary complexes. Cleavage of the nascent transcript by S-II allows the resumption of elongation from the new 3'-terminus. The sequence is that of Transcription elongation factor A protein 1 (TCEA1) from Bos taurus (Bovine).